The following is an 818-amino-acid chain: Dapper 1-A (818 aa).

Pro residues predominate over residues 1-10 (MKPIPSPEPP). 5 disordered regions span residues 1-30 (MKPI…WERH), 60-80 (VLSP…PRSD), 122-144 (IDSE…LSDG), 455-486 (NVTP…SALL), and 510-530 (ESSS…SSSQ). An interaction with tcf7l1-A region spans residues 1–337 (MKPIPSPEPP…PVRTNKPRTS (337 aa)). Over residues 21–30 (DKGEAEWERH) the composition is skewed to basic and acidic residues. A coiled-coil region spans residues 79 to 130 (SDEQKLLEENISLLKKQLNCLRKRDAGLLSQLHELDKQINDLKIDSEKTEET). Positions 122-132 (IDSEKTEETDS) are enriched in basic and acidic residues. Residues 455–485 (NVTPNAPANLPNASSSVCNGSPRESTQNSAL) show a composition bias toward polar residues. Over residues 512–524 (SSFEERPPLDFKS) the composition is skewed to basic and acidic residues. Positions 815 to 818 (MTTV) match the PDZ-binding motif.

Belongs to the dapper family. In terms of assembly, interacts with dbf4 and tcf7l1-A. Interacts with dvl2/dsh via the C-terminus. Expressed in the animal and dorsal marginal regions at late blastula and early gastrula stages. Expressed predominantly in the anterior neural plate at neurulation. Expressed mainly in the ectodermal placodes, including the eye anlagen and the otic vesicle, at later stages of development.

It is found in the cytoplasm. Its subcellular location is the nucleus. Functionally, involved in regulation of intracellular signaling pathways during development. Specifically thought to play a role in canonical and/or non-canonical Wnt signaling pathways through interaction with DSH (Dishevelled) family proteins. Binds to dvl2/dsh and impedes the degradation of beta-catenin (ctnnb1-A and possibly ctnnb1-B), thereby enhancing the transcriptional activation of target genes of the Wnt signaling pathway. Also promotes catenin delta/ctnnd1 stability which in turn promotes zbtb33/kaiso sequestration and thus is involved in the regulation of zbtb33/kaiso-mediated transcriptional repression. May also bind to and directly stimulate the transcriptional activity of tcf7l1-A. Required for eye development and neural patterning. The sequence is that of Dapper 1-A (dact1-a) from Xenopus laevis (African clawed frog).